We begin with the raw amino-acid sequence, 525 residues long: Probable malate:quinone oxidoreductase (525 aa).

This sequence belongs to the MQO family. It depends on FAD as a cofactor.

It carries out the reaction (S)-malate + a quinone = a quinol + oxaloacetate. It functions in the pathway carbohydrate metabolism; tricarboxylic acid cycle; oxaloacetate from (S)-malate (quinone route): step 1/1. The sequence is that of Probable malate:quinone oxidoreductase from Serratia proteamaculans (strain 568).